A 714-amino-acid chain; its full sequence is Inducible lysine decarboxylase (714 aa).

An N6-(pyridoxal phosphate)lysine modification is found at lysine 367.

It belongs to the Orn/Lys/Arg decarboxylase class-I family. In terms of assembly, homodecamer. Interacts with RavA. The cofactor is pyridoxal 5'-phosphate.

Its subcellular location is the cytoplasm. It carries out the reaction L-lysine + H(+) = cadaverine + CO2. This is Inducible lysine decarboxylase (cadA) from Salmonella typhi.